Here is a 522-residue protein sequence, read N- to C-terminus: Golgin subfamily A member 6-like protein 10 (522 aa).

Pro residues predominate over residues 1 to 11; sequence MWPQPRLPPHP. Positions 1–77 are disordered; sequence MWPQPRLPPH…DSATGIYGEG (77 aa). Polar residues predominate over residues 51–62; that stretch reads NGSSPDTATSGG. Residues 157 to 328 adopt a coiled-coil conformation; that stretch reads SKVEQLQDET…RLCEQEKLPG (172 aa). Residues 439–452 are compositionally biased toward basic and acidic residues; it reads KELEKSGGAEEPRG. A disordered region spans residues 439 to 503; it reads KELEKSGGAE…TGEAAGGAEE (65 aa). Low complexity-rich tracts occupy residues 456–471 and 489–503; these read AAAA…PQGA and GEAV…GAEE.

It belongs to the GOLGA6 family.

In Homo sapiens (Human), this protein is Golgin subfamily A member 6-like protein 10.